The sequence spans 420 residues: MSTPIEAAWQLAKTRYAGLNIDVEAALKQLDQIPVSMHCWQGDDVAGFENTGGPLTGGIQATGNYPGKASTPDELRADLEQAFALIPGPKRLNLHAIYLESAQPVARNEIAPEHFSNWVAWAKRHQLGLDFNPTCFSHPLSADGFTLSHPDEKVRRFWIEHCQASRRISAYFGRELGTPSVMNIWVPDGMKDLTIDRLAFRQRLLSALDEVIAEPLDQTHHIDAVESKLFGIGAESFTVGSSEFCLGYAASRGTALCLDAGHFHPTEVISDKISSAILYVPRLLLHVSRPVRWDSDHVVLLDDETQAIAHEIIRHQLLNRVHIGLDFFDASINRIAAWVIGTRNMKKALLRALLEPTETLRKLEQNGDYTARLALLEEQKSLPWQAVWEHYCQRHDVIPGSEWLQQVRQYEETILTQRQG.

His262, Asp294, and Asp296 together coordinate Mn(2+).

The protein belongs to the rhamnose isomerase family. Homotetramer. Requires Mn(2+) as cofactor.

It is found in the cytoplasm. The enzyme catalyses L-rhamnopyranose = L-rhamnulose. It functions in the pathway carbohydrate degradation; L-rhamnose degradation; glycerone phosphate from L-rhamnose: step 1/3. Functionally, catalyzes the interconversion of L-rhamnose and L-rhamnulose. The chain is L-rhamnose isomerase from Pectobacterium atrosepticum (strain SCRI 1043 / ATCC BAA-672) (Erwinia carotovora subsp. atroseptica).